Reading from the N-terminus, the 331-residue chain is Anthranilate phosphoribosyltransferase (331 aa).

5-phospho-alpha-D-ribose 1-diphosphate-binding positions include G78, 81–82 (GD), S86, 88–91 (NIST), 106–114 (KHGNKSITS), and S118. G78 is a binding site for anthranilate. Position 90 (S90) interacts with Mg(2+). Residue N109 coordinates anthranilate. Residue R163 participates in anthranilate binding. Residues D222 and E223 each coordinate Mg(2+).

This sequence belongs to the anthranilate phosphoribosyltransferase family. As to quaternary structure, homodimer. Requires Mg(2+) as cofactor.

It carries out the reaction N-(5-phospho-beta-D-ribosyl)anthranilate + diphosphate = 5-phospho-alpha-D-ribose 1-diphosphate + anthranilate. It functions in the pathway amino-acid biosynthesis; L-tryptophan biosynthesis; L-tryptophan from chorismate: step 2/5. Catalyzes the transfer of the phosphoribosyl group of 5-phosphorylribose-1-pyrophosphate (PRPP) to anthranilate to yield N-(5'-phosphoribosyl)-anthranilate (PRA). The protein is Anthranilate phosphoribosyltransferase of Staphylococcus epidermidis (strain ATCC 35984 / DSM 28319 / BCRC 17069 / CCUG 31568 / BM 3577 / RP62A).